A 305-amino-acid polypeptide reads, in one-letter code: Methionyl-tRNA formyltransferase (305 aa).

110–113 lines the (6S)-5,6,7,8-tetrahydrofolate pocket; it reads SLLP.

This sequence belongs to the Fmt family.

It carries out the reaction L-methionyl-tRNA(fMet) + (6R)-10-formyltetrahydrofolate = N-formyl-L-methionyl-tRNA(fMet) + (6S)-5,6,7,8-tetrahydrofolate + H(+). Functionally, attaches a formyl group to the free amino group of methionyl-tRNA(fMet). The formyl group appears to play a dual role in the initiator identity of N-formylmethionyl-tRNA by promoting its recognition by IF2 and preventing the misappropriation of this tRNA by the elongation apparatus. This chain is Methionyl-tRNA formyltransferase, found in Gluconacetobacter diazotrophicus (strain ATCC 49037 / DSM 5601 / CCUG 37298 / CIP 103539 / LMG 7603 / PAl5).